The primary structure comprises 127 residues: Glycine cleavage system H protein (127 aa).

The 83-residue stretch at 24–106 (TATIGITDYA…YAEGWMLKLK (83 aa)) folds into the Lipoyl-binding domain. At lysine 65 the chain carries N6-lipoyllysine.

Belongs to the GcvH family. The glycine cleavage system is composed of four proteins: P, T, L and H. It depends on (R)-lipoate as a cofactor.

Functionally, the glycine cleavage system catalyzes the degradation of glycine. The H protein shuttles the methylamine group of glycine from the P protein to the T protein. This is Glycine cleavage system H protein from Opitutus terrae (strain DSM 11246 / JCM 15787 / PB90-1).